The following is a 142-amino-acid chain: Putative pterin-4-alpha-carbinolamine dehydratase (142 aa).

Belongs to the pterin-4-alpha-carbinolamine dehydratase family.

The catalysed reaction is (4aS,6R)-4a-hydroxy-L-erythro-5,6,7,8-tetrahydrobiopterin = (6R)-L-erythro-6,7-dihydrobiopterin + H2O. This chain is Putative pterin-4-alpha-carbinolamine dehydratase (pcbd-1), found in Caenorhabditis elegans.